A 177-amino-acid chain; its full sequence is VQ motif-containing protein 11 (177 aa).

The short motif at 25-34 (FRNIVQKLTG) is the VQ element. A phosphoserine mark is found at serine 43, serine 99, serine 115, serine 142, and serine 145. Residues 115–133 (SAREEHHAQPDKEEQKAIA) show a composition bias toward basic and acidic residues. Residues 115–177 (SAREEHHAQP…RIHEDNHRDS (63 aa)) form a disordered region. The span at 148–159 (EPAPELLPLFPL) shows a compositional bias: low complexity. Serine 161 carries the post-translational modification Phosphoserine. The span at 168-177 (RIHEDNHRDS) shows a compositional bias: basic and acidic residues.

Phosphorylated on serine residues by MPK6.

It is found in the nucleus. Its function is as follows. May modulate WRKY transcription factor activities. In Arabidopsis thaliana (Mouse-ear cress), this protein is VQ motif-containing protein 11.